The following is a 1167-amino-acid chain: ATP-dependent helicase/deoxyribonuclease subunit B (1167 aa).

The UvrD-like helicase ATP-binding domain occupies 1–359 (MSLRFLLGRS…IRQTEAYRDL (359 aa)). 8–15 (GRSGSGKT) contributes to the ATP binding site. One can recognise a UvrD-like helicase C-terminal domain in the interval 282–588 (ANRRHEDRAL…EFSLVPPAMD (307 aa)). 4 residues coordinate [4Fe-4S] cluster: Cys-804, Cys-1126, Cys-1129, and Cys-1135.

Belongs to the helicase family. AddB/RexB type 1 subfamily. Heterodimer of AddA and AddB. Requires Mg(2+) as cofactor. It depends on [4Fe-4S] cluster as a cofactor.

The heterodimer acts as both an ATP-dependent DNA helicase and an ATP-dependent, dual-direction single-stranded exonuclease. Recognizes the chi site generating a DNA molecule suitable for the initiation of homologous recombination. The AddB subunit has 5' -&gt; 3' nuclease activity but not helicase activity. This chain is ATP-dependent helicase/deoxyribonuclease subunit B, found in Geobacillus kaustophilus (strain HTA426).